We begin with the raw amino-acid sequence, 277 residues long: MRYWGKLLGLVLGVMYAPGVVGALLGLLVGHMVDRALGAKRRGFFADQQTRQSLFFRTTFQVMGHLTKAKGRVTEVDIQLASQLMDRMQLHGAARTAAQQAFREGKESHFPLRKTLQEFRRVCFGRFDLIRIFLEIQLQAAFADGSLHPNERQVLYVIAEELGISRGQFDQFLRMFDGGRQFGGHGGWQGQQGGYSQSGYQRAPQGPTLEDACKVLGVNSSDDSVAIKRAYRKLMGEHHPDKLVAKGLPPEMMEMAKQKAQEIQAAYDLIKREKGFK.

Residues 1–6 (MRYWGK) lie on the Periplasmic side of the membrane. Residues 7 to 31 (LLGLVLGVMYAPGVVGALLGLLVGH) form a helical membrane-spanning segment. Over 32 to 277 (MVDRALGAKR…DLIKREKGFK (246 aa)) the chain is Cytoplasmic. Residues 211 to 277 (DACKVLGVNS…DLIKREKGFK (67 aa)) form the J domain.

Homodimer.

The protein localises to the cell inner membrane. Functionally, regulatory DnaK co-chaperone. Direct interaction between DnaK and DjlA is needed for the induction of the wcaABCDE operon, involved in the synthesis of a colanic acid polysaccharide capsule, possibly through activation of the RcsB/RcsC phosphotransfer signaling pathway. The colanic acid capsule may help the bacterium survive conditions outside the host. This Yersinia pseudotuberculosis serotype I (strain IP32953) protein is Co-chaperone protein DjlA.